Consider the following 131-residue polypeptide: Small ribosomal subunit protein uS8c (131 aa).

The protein belongs to the universal ribosomal protein uS8 family. In terms of assembly, part of the 30S ribosomal subunit.

The protein resides in the plastid. Its subcellular location is the chloroplast. One of the primary rRNA binding proteins, it binds directly to 16S rRNA central domain where it helps coordinate assembly of the platform of the 30S subunit. The polypeptide is Small ribosomal subunit protein uS8c (rps8) (Phalaenopsis aphrodite subsp. formosana (Moth orchid)).